Consider the following 557-residue polypeptide: Dihydroxy-acid dehydratase (557 aa).

A [2Fe-2S] cluster-binding site is contributed by Cys-50. Position 82 (Asp-82) interacts with Mg(2+). [2Fe-2S] cluster is bound at residue Cys-123. Mg(2+) contacts are provided by Asp-124 and Lys-125. Lys-125 bears the N6-carboxylysine mark. Cys-195 contributes to the [2Fe-2S] cluster binding site. Glu-447 lines the Mg(2+) pocket. The Proton acceptor role is filled by Ser-473.

It belongs to the IlvD/Edd family. Homodimer. It depends on [2Fe-2S] cluster as a cofactor. Mg(2+) is required as a cofactor.

The enzyme catalyses (2R)-2,3-dihydroxy-3-methylbutanoate = 3-methyl-2-oxobutanoate + H2O. The catalysed reaction is (2R,3R)-2,3-dihydroxy-3-methylpentanoate = (S)-3-methyl-2-oxopentanoate + H2O. It functions in the pathway amino-acid biosynthesis; L-isoleucine biosynthesis; L-isoleucine from 2-oxobutanoate: step 3/4. It participates in amino-acid biosynthesis; L-valine biosynthesis; L-valine from pyruvate: step 3/4. Functionally, functions in the biosynthesis of branched-chain amino acids. Catalyzes the dehydration of (2R,3R)-2,3-dihydroxy-3-methylpentanoate (2,3-dihydroxy-3-methylvalerate) into 2-oxo-3-methylpentanoate (2-oxo-3-methylvalerate) and of (2R)-2,3-dihydroxy-3-methylbutanoate (2,3-dihydroxyisovalerate) into 2-oxo-3-methylbutanoate (2-oxoisovalerate), the penultimate precursor to L-isoleucine and L-valine, respectively. This chain is Dihydroxy-acid dehydratase, found in Herminiimonas arsenicoxydans.